Reading from the N-terminus, the 362-residue chain is Molybdenum import ATP-binding protein ModC (362 aa).

The ABC transporter domain maps to 2–236; sequence VSPIEVRLQM…LDLPLAMGDD (235 aa). 34-41 is an ATP binding site; it reads GPSGSGKT. One can recognise a Mop domain in the interval 297-362; that stretch reads HSSILNRLPV…AQIKAVAVLA (66 aa).

Belongs to the ABC transporter superfamily. Molybdate importer (TC 3.A.1.8) family. The complex is composed of two ATP-binding proteins (ModC), two transmembrane proteins (ModB) and a solute-binding protein (ModA).

The protein resides in the cell inner membrane. The enzyme catalyses molybdate(out) + ATP + H2O = molybdate(in) + ADP + phosphate + H(+). Part of the ABC transporter complex ModABC involved in molybdenum import. Responsible for energy coupling to the transport system. The polypeptide is Molybdenum import ATP-binding protein ModC (Pseudomonas syringae pv. tomato (strain ATCC BAA-871 / DC3000)).